The chain runs to 188 residues: Adenine phosphoribosyltransferase (188 aa).

It belongs to the purine/pyrimidine phosphoribosyltransferase family. As to quaternary structure, homodimer.

It localises to the cytoplasm. It catalyses the reaction AMP + diphosphate = 5-phospho-alpha-D-ribose 1-diphosphate + adenine. Its pathway is purine metabolism; AMP biosynthesis via salvage pathway; AMP from adenine: step 1/1. In terms of biological role, catalyzes a salvage reaction resulting in the formation of AMP, that is energically less costly than de novo synthesis. This chain is Adenine phosphoribosyltransferase, found in Burkholderia vietnamiensis (strain G4 / LMG 22486) (Burkholderia cepacia (strain R1808)).